The primary structure comprises 829 residues: Leucine--tRNA ligase (829 aa).

The 'HIGH' region motif lies at 34-44; it reads PYPSGNIHMGH. Residues 591–595 carry the 'KMSKS' region motif; sequence KMSKS. Lys-594 contributes to the ATP binding site.

This sequence belongs to the class-I aminoacyl-tRNA synthetase family.

The protein resides in the cytoplasm. The enzyme catalyses tRNA(Leu) + L-leucine + ATP = L-leucyl-tRNA(Leu) + AMP + diphosphate. The sequence is that of Leucine--tRNA ligase from Ehrlichia chaffeensis (strain ATCC CRL-10679 / Arkansas).